A 330-amino-acid chain; its full sequence is Autoinducer 2 import system permease protein LsrD (330 aa).

Topologically, residues 1-4 are cytoplasmic; that stretch reads MRIR. A helical transmembrane segment spans residues 5–25; the sequence is YGWELALAALLVIEIVAFGAI. Residues 26 to 42 are Periplasmic-facing; the sequence is NPRMLDLNMLLFSTSDF. The chain crosses the membrane as a helical span at residues 43–63; that stretch reads ICIGIVALPLTMVIVSGGIDI. The Cytoplasmic segment spans residues 64-67; it reads SFGS. 2 consecutive transmembrane segments (helical) span residues 68 to 88 and 89 to 109; these read TIGL…PMPL and AILL…GLII. Residues 110 to 115 lie on the Cytoplasmic side of the membrane; it reads YTKVNP. A helical transmembrane segment spans residues 116–136; that stretch reads LVITLGTLYLFAGSALLLSGM. Topologically, residues 137–159 are periplasmic; that stretch reads AGATGYEGIGGFPMAFTDFANLD. Residues 160-180 form a helical membrane-spanning segment; that stretch reads VLGLPVPLIIFLICLLVFWLW. Residues 181–209 lie on the Cytoplasmic side of the membrane; that stretch reads LHKTHAGRNVFLIGQSPRVALYSAIPVNR. Residues 210–230 traverse the membrane as a helical segment; that stretch reads TLCALYAMTGLASAVAAVLLV. Residues 231–237 are Periplasmic-facing; sequence SYFGSAR. 2 consecutive transmembrane segments (helical) span residues 238-258 and 259-279; these read SDLG…GGAN and IYGG…VGYL. Over 280-285 the chain is Periplasmic; the sequence is QQGLQM. Residues 286-306 form a helical membrane-spanning segment; it reads AGVPNQVSSALSGALLIVVVV. Residues 307–330 lie on the Cytoplasmic side of the membrane; that stretch reads GRSVSLHRQQIKEWLARRANNPLP.

The protein belongs to the binding-protein-dependent transport system permease family. AraH/RbsC subfamily. In terms of assembly, the complex is composed of two ATP-binding proteins (LsrA), two transmembrane proteins (LsrC and LsrD) and a solute-binding protein (LsrB).

Its subcellular location is the cell inner membrane. Part of the ABC transporter complex LsrABCD involved in autoinducer 2 (AI-2) import. Probably responsible for the translocation of the substrate across the membrane. The protein is Autoinducer 2 import system permease protein LsrD (lsrD) of Shigella flexneri serotype 5b (strain 8401).